We begin with the raw amino-acid sequence, 186 residues long: Elongation factor P (186 aa).

It belongs to the elongation factor P family.

It localises to the cytoplasm. It functions in the pathway protein biosynthesis; polypeptide chain elongation. Functionally, involved in peptide bond synthesis. Stimulates efficient translation and peptide-bond synthesis on native or reconstituted 70S ribosomes in vitro. Probably functions indirectly by altering the affinity of the ribosome for aminoacyl-tRNA, thus increasing their reactivity as acceptors for peptidyl transferase. The sequence is that of Elongation factor P from Prochlorococcus marinus (strain MIT 9211).